Reading from the N-terminus, the 289-residue chain is NFIL3 like protein (289 aa).

Residues 1-27 (MDVGFSGLPDVSQSHSKTLWGARGRGP) form a disordered region. In terms of domain architecture, bZIP spans 42–105 (DTVYWEKRRK…GLLPLTGGPR (64 aa)). Positions 48–64 (KRRKNNEAAKRSREKRR) are basic motif. A leucine-zipper region spans residues 70–91 (IEGRLAALMEENALLKGELKAL).

It belongs to the bZIP family. NFIL3 subfamily.

It localises to the nucleus. This Homo sapiens (Human) protein is NFIL3 like protein.